A 405-amino-acid polypeptide reads, in one-letter code: L-carnitine CoA-transferase (405 aa).

Lysine 97 and arginine 104 together coordinate CoA. Aspartate 169 functions as the Nucleophile in the catalytic mechanism.

It belongs to the CoA-transferase III family. CaiB subfamily. As to quaternary structure, homodimer.

The protein resides in the cytoplasm. It carries out the reaction crotonobetainyl-CoA + (R)-carnitine = crotonobetaine + (R)-carnitinyl-CoA. The enzyme catalyses 4-(trimethylamino)butanoyl-CoA + (R)-carnitine = (R)-carnitinyl-CoA + 4-(trimethylamino)butanoate. It functions in the pathway amine and polyamine metabolism; carnitine metabolism. In terms of biological role, catalyzes the reversible transfer of the CoA moiety from gamma-butyrobetainyl-CoA to L-carnitine to generate L-carnitinyl-CoA and gamma-butyrobetaine. Is also able to catalyze the reversible transfer of the CoA moiety from gamma-butyrobetainyl-CoA or L-carnitinyl-CoA to crotonobetaine to generate crotonobetainyl-CoA. The polypeptide is L-carnitine CoA-transferase (Shigella flexneri serotype 5b (strain 8401)).